A 122-amino-acid polypeptide reads, in one-letter code: Flagellar protein FliT (122 aa).

Residues 1-50 (MTSTVEFINRWQRIALLSQSLLELAQRGEWDLLLQQEVSYLQRIETVMEK) are required for homodimerization. A fliD binding region spans residues 60–98 (IQDMVAGYIKQTLDNEQLLKGLLQQRLDELSSLIGQSTR).

This sequence belongs to the FliT family. Homodimer. Interacts with FliD and FlhC.

The protein resides in the cytoplasm. It localises to the cytosol. Dual-function protein that regulates the transcription of class 2 flagellar operons and that also acts as an export chaperone for the filament-capping protein FliD. As a transcriptional regulator, acts as an anti-FlhDC factor; it directly binds FlhC, thus inhibiting the binding of the FlhC/FlhD complex to class 2 promoters, resulting in decreased expression of class 2 flagellar operons. As a chaperone, effects FliD transition to the membrane by preventing its premature polymerization, and by directing it to the export apparatus. The protein is Flagellar protein FliT of Salmonella paratyphi A (strain AKU_12601).